The sequence spans 267 residues: Zinc finger protein ZAT1 (267 aa).

The segment at 5-27 (HKCKLCWKSFANGRALGGHMRSH) adopts a C2H2-type 1 zinc-finger fold. Disordered stretches follow at residues 34–99 (PSQP…ADIK) and 181–204 (SHKK…KKKS). Positions 52–62 (QDRESETESSK) are enriched in basic and acidic residues. Residues 63–73 (KPSRKRSRLNR) show a composition bias toward basic residues. The span at 83-97 (QSNEEGKSETARAAD) shows a compositional bias: basic and acidic residues. 2 consecutive C2H2-type zinc fingers follow at residues 160 to 182 (FECE…RASH) and 209 to 231 (HECP…KRSH).

It is found in the nucleus. Functionally, probable transcription factor that may be involved in stress responses. The sequence is that of Zinc finger protein ZAT1 (ZAT1) from Arabidopsis thaliana (Mouse-ear cress).